A 102-amino-acid chain; its full sequence is Trp operon repressor homolog (102 aa).

Residues glutamine 59 to leucine 82 mediate DNA binding.

Belongs to the TrpR family. Homodimer.

Its subcellular location is the cytoplasm. Its function is as follows. This protein is an aporepressor. When complexed with L-tryptophan it binds the operator region of the trp operon and prevents the initiation of transcription. The protein is Trp operon repressor homolog of Vibrio vulnificus (strain CMCP6).